Consider the following 427-residue polypeptide: Adenylosuccinate synthetase (427 aa).

GTP is bound by residues glycine 12–lysine 18 and glycine 40–threonine 42. Aspartate 13 acts as the Proton acceptor in catalysis. 2 residues coordinate Mg(2+): aspartate 13 and glycine 40. Residues aspartate 13–lysine 16, asparagine 38–histidine 41, threonine 126, arginine 140, glutamine 221, threonine 236, and arginine 299 each bind IMP. Catalysis depends on histidine 41, which acts as the Proton donor. Serine 295 to arginine 301 contributes to the substrate binding site. Residues arginine 301, lysine 327–aspartate 329, and serine 409–glycine 411 contribute to the GTP site.

Belongs to the adenylosuccinate synthetase family. As to quaternary structure, homodimer. The cofactor is Mg(2+).

It is found in the cytoplasm. The catalysed reaction is IMP + L-aspartate + GTP = N(6)-(1,2-dicarboxyethyl)-AMP + GDP + phosphate + 2 H(+). The protein operates within purine metabolism; AMP biosynthesis via de novo pathway; AMP from IMP: step 1/2. In terms of biological role, plays an important role in the de novo pathway of purine nucleotide biosynthesis. Catalyzes the first committed step in the biosynthesis of AMP from IMP. The protein is Adenylosuccinate synthetase of Borrelia recurrentis (strain A1).